Consider the following 462-residue polypeptide: Indoleacetamide hydrolase (462 aa).

Catalysis depends on charge relay system residues Lys74 and Ser149. Ser173 (acyl-ester intermediate) is an active-site residue.

It belongs to the amidase family.

Its pathway is plant hormone metabolism; auxin biosynthesis. Hydrolyzes indole-3-acetamide (IAM) into indole-3-acetic acid (IAA). In Allorhizobium ampelinum (strain ATCC BAA-846 / DSM 112012 / S4) (Agrobacterium vitis (strain S4)), this protein is Indoleacetamide hydrolase (iaaH).